A 152-amino-acid polypeptide reads, in one-letter code: Putative pseudoazurin (152 aa).

The signal sequence occupies residues 1-23; sequence MPLKFGLIVATAALIASAASLMA. Residues 28 to 116 enclose the Plastocyanin-like domain; the sequence is VQMLNKGTDG…MGMVALIQVG (89 aa). Cu cation contacts are provided by His-63, Cys-101, His-104, and Met-109.

Requires Cu cation as cofactor.

The protein resides in the periplasm. Its function is as follows. This soluble electron transfer copper protein is required for the inactivation of copper-containing nitrite reductase in the presence of oxygen. This Rhizobium leguminosarum bv. viciae protein is Putative pseudoazurin (azu).